A 283-amino-acid polypeptide reads, in one-letter code: Plasma membrane ascorbate-dependent reductase CYBRD1 (283 aa).

At 1–5 the chain is on the cytoplasmic side; it reads MEGYK. Residues 6 to 30 form a helical membrane-spanning segment; it reads SFLAFLVSSLLLGFLGVIFTLVWVL. Residues 13 to 218 form the Cytochrome b561 domain; sequence SSLLLGFLGV…FGGLVVWMVT (206 aa). The Extracellular portion of the chain corresponds to 31–45; sequence HWREGLGWDGGAAEF. Residues 46-67 form a helical membrane-spanning segment; it reads NWHPVLVTSGFIFIQGIAIIVY. 3 residues coordinate heme b: His-48, Arg-68, and Lys-77. The Cytoplasmic segment spans residues 68 to 76; it reads RLPWTWKCS. Residues Lys-77 and Lys-81 each coordinate L-ascorbate. Residues 77-103 form a helical membrane-spanning segment; that stretch reads KLLMKFIHAGLHLTALIFTIVALVAVF. Position 84 (His-84) interacts with heme b. Over 104-116 the chain is Extracellular; the sequence is DFHNAKNIPNMYS. Fe(3+) is bound at residue His-106. Residues 113 to 116 and His-118 each bind heme b; that span reads NMYS. A helical membrane pass occupies residues 117–142; the sequence is LHSWIGLTVVILYALQLVLGVSIYLL. Topologically, residues 143–149 are cytoplasmic; the sequence is PFASNTL. L-ascorbate is bound at residue Arg-150. Residues 150-177 traverse the membrane as a helical segment; the sequence is RAALMPVHVYSGLFIFGTVIATALMGIT. Positions 157 and 178 each coordinate heme b. Residues 178–195 are Extracellular-facing; sequence EKLIFSLKEPPYSKLPPE. A helical transmembrane segment spans residues 196 to 220; it reads AIFVNTFGLLILVFGGLVVWMVTTP. The Cytoplasmic segment spans residues 221–283; that stretch reads AWKRPREQGM…LDEAGQRSTM (63 aa). Residue Lys-223 participates in heme b binding. Positions 234 to 262 are disordered; that stretch reads SPTVSSPDETEEGSTITDCSNTEKSDVEL. The segment covering 235–253 has biased composition (polar residues); sequence PTVSSPDETEEGSTITDCS.

In terms of assembly, homodimer. The cofactor is heme b.

It localises to the cell membrane. The protein localises to the apical cell membrane. It carries out the reaction Fe(3+)(out) + L-ascorbate(in) = monodehydro-L-ascorbate radical(in) + Fe(2+)(out) + H(+). The enzyme catalyses Cu(2+)(out) + L-ascorbate(in) = Cu(+)(out) + monodehydro-L-ascorbate radical(in) + H(+). The catalysed reaction is monodehydro-L-ascorbate radical(out) + L-ascorbate(in) = monodehydro-L-ascorbate radical(in) + L-ascorbate(out). Plasma membrane reductase that uses cytoplasmic ascorbate as an electron donor to reduce extracellular Fe(3+) into Fe(2+). It is also able to reduce extracellular monodehydro-L-ascorbate and may be involved in extracellular ascorbate regeneration. May also function as a cupric transmembrane reductase. The protein is Plasma membrane ascorbate-dependent reductase CYBRD1 (cybrd1) of Xenopus laevis (African clawed frog).